Reading from the N-terminus, the 284-residue chain is Pantothenate synthetase (284 aa).

30–37 (MGNLHDGH) contacts ATP. The active-site Proton donor is the His-37. Gln-61 lines the (R)-pantoate pocket. Gln-61 contributes to the beta-alanine binding site. 149–152 (GEKD) lines the ATP pocket. Position 155 (Gln-155) interacts with (R)-pantoate. ATP is bound by residues Ile-178 and 186–189 (LSSR).

This sequence belongs to the pantothenate synthetase family. In terms of assembly, homodimer.

It localises to the cytoplasm. The catalysed reaction is (R)-pantoate + beta-alanine + ATP = (R)-pantothenate + AMP + diphosphate + H(+). The protein operates within cofactor biosynthesis; (R)-pantothenate biosynthesis; (R)-pantothenate from (R)-pantoate and beta-alanine: step 1/1. Functionally, catalyzes the condensation of pantoate with beta-alanine in an ATP-dependent reaction via a pantoyl-adenylate intermediate. This is Pantothenate synthetase from Salmonella paratyphi A (strain ATCC 9150 / SARB42).